Reading from the N-terminus, the 86-residue chain is MAMTVKKDNNEVRIQWRVADIKIPTSEIKNISQDQNIHEVPKLDRDKVSRIGSTFGKTNRVIIDTDDHEYIIYTQNDQKVYNEVTK.

It belongs to the UPF0457 family.

The chain is UPF0457 protein SSP0714 from Staphylococcus saprophyticus subsp. saprophyticus (strain ATCC 15305 / DSM 20229 / NCIMB 8711 / NCTC 7292 / S-41).